An 87-amino-acid polypeptide reads, in one-letter code: MENDKGQLVELYIPRKCSATNRIIKADDHASVQINIAKVDEEGRAIPGEYITYALSGNVRARGESDDSLNRLAQNDGLLKNVWSYSR.

It belongs to the eukaryotic ribosomal protein eS21 family. In terms of assembly, component of the small ribosomal subunit. Mature ribosomes consist of a small (40S) and a large (60S) subunit. The 40S subunit contains about 33 different proteins and 1 molecule of RNA (18S). The 60S subunit contains about 49 different proteins and 3 molecules of RNA (25S, 5.8S and 5S).

Its subcellular location is the cytoplasm. Its function is as follows. Required for the processing of the 20S rRNA-precursor to mature 18S rRNA in a late step of the maturation of 40S ribosomal subunits. Has a physiological role leading to 18S rRNA stability. The chain is Small ribosomal subunit protein eS21 (RPS21) from Candida glabrata (strain ATCC 2001 / BCRC 20586 / JCM 3761 / NBRC 0622 / NRRL Y-65 / CBS 138) (Yeast).